A 624-amino-acid chain; its full sequence is uncharacterized protein (624 aa).

The N-terminal stretch at 1–29 is a signal peptide; sequence MRFHRQGTAATVGVLLIVLLGFCWKLSES. Asn-68, Asn-150, Asn-219, Asn-366, Asn-441, Asn-447, Asn-464, and Asn-528 each carry an N-linked (GlcNAc...) asparagine glycan. Residues 141–174 form a disordered region; the sequence is LERRHGRFGNGTHGDHPKGPPPPPPPDEKDRGSQ.

It is found in the secreted. This is an uncharacterized protein from Saccharomyces cerevisiae (strain ATCC 204508 / S288c) (Baker's yeast).